A 1188-amino-acid polypeptide reads, in one-letter code: Meiotically up-regulated gene 190 protein (1188 aa).

Residues 1–11 (MSTHSGDSTKQ) show a composition bias toward polar residues. 2 disordered regions span residues 1 to 61 (MSTH…DPIT) and 83 to 125 (FTVP…EADN). A compositionally biased stretch (basic and acidic residues) spans 41-61 (EKKEEQQREQTENEKLFDPIT). The segment covering 84 to 112 (TVPNQSIQGSSLPSEKPYLSSNQPTNVYK) has biased composition (polar residues). The chain crosses the membrane as a helical span at residues 173-193 (LVISWFFTHSIIISAVLPLAI). The SMP-LTD domain maps to 228–453 (IPESAEWMNH…SPKSMTIDLS (226 aa)). Residues 298 to 318 (ASESFSEKQASEAEHKDEPEQ) are disordered. The segment covering 302–318 (FSEKQASEAEHKDEPEQ) has biased composition (basic and acidic residues). C2 domains are found at residues 451 to 576 (DLSK…ERCD) and 636 to 781 (KEEE…TKWY). Ca(2+) is bound by residues D485, D491, D544, D546, S549, and D552. Disordered regions lie at residues 615–639 (TIPR…KEEE) and 1002–1066 (QRAS…GTMN). S1005 is modified (phosphoserine). Positions 1022 to 1032 (DDSVDTEDEET) are enriched in acidic residues.

Ca(2+) serves as cofactor.

Its subcellular location is the cytoplasm. It localises to the endoplasmic reticulum membrane. The protein localises to the nucleus membrane. It is found in the cytoskeleton. The protein resides in the microtubule organizing center. Its subcellular location is the spindle pole body. In terms of biological role, has a role in meiosis. The sequence is that of Meiotically up-regulated gene 190 protein (mug190) from Schizosaccharomyces pombe (strain 972 / ATCC 24843) (Fission yeast).